We begin with the raw amino-acid sequence, 463 residues long: Elongation factor 1-alpha 1 (463 aa).

The 238-residue stretch at 5 to 242 (KIHINIVVIG…DAILPPARPT (238 aa)) folds into the tr-type G domain. Positions 14–21 (GHVDSGKS) are G1. 14–21 (GHVDSGKS) provides a ligand contact to GTP. Residues 70-74 (GITID) form a G2 region. Residues 91–94 (DAPG) form a G3 region. GTP-binding positions include 91-95 (DAPGH) and 153-156 (NKMD). The segment at 153-156 (NKMD) is G4. The interval 194–196 (SGW) is G5. Glu301 and Glu374 each carry 5-glutamyl glycerylphosphorylethanolamine.

The protein belongs to the TRAFAC class translation factor GTPase superfamily. Classic translation factor GTPase family. EF-Tu/EF-1A subfamily.

The protein resides in the cytoplasm. In terms of biological role, this protein promotes the GTP-dependent binding of aminoacyl-tRNA to the A-site of ribosomes during protein biosynthesis. The chain is Elongation factor 1-alpha 1 from Drosophila melanogaster (Fruit fly).